An 854-amino-acid chain; its full sequence is Fibronectin-binding protein PlpA (854 aa).

The segment covering 1–24 (MDNNQNNFNQPGQQGFDQYQQQSG) has biased composition (low complexity). The tract at residues 1–33 (MDNNQNNFNQPGQQGFDQYQQQSGALVSYGYDA) is disordered. Positions 91–109 (QYNQQQNQGYEQQYDEYGN) are fibronectin-binding. Disordered regions lie at residues 247–327 (YEQE…LEAP), 411–434 (SSNNELKTTNQQLKTSNEALEDSN), 743–766 (TINPPQPQPQALPQPHPQPQQLPP), and 835–854 (IQPSFRRRGGRAKFDPYNNR). Residues 258-267 (EPAHEQDLRE) show a composition bias toward basic and acidic residues. Polar residues-rich tracts occupy residues 311–320 (TVNQPDQTPI) and 411–428 (SSNNELKTTNQQLKTSNE). The stretch at 384 to 622 (NLEEIQKVKL…SSFQKALSEV (239 aa)) forms a coiled coil. A compositionally biased stretch (pro residues) spans 746–764 (PPQPQPQALPQPHPQPQQL).

The protein localises to the cell membrane. Its function is as follows. Binds immobilized fibronectin, specifically the gelatin/heparin-binding domain. The polypeptide is Fibronectin-binding protein PlpA (plpA) (Mycoplasmoides gallisepticum (strain R(low / passage 15 / clone 2)) (Mycoplasma gallisepticum)).